We begin with the raw amino-acid sequence, 398 residues long: ATP-dependent RNA helicase eIF4A (398 aa).

The short motif at 25 to 53 (DSFDAMNLRAELLRGVYAYGFERPSAIQQ) is the Q motif element. The Helicase ATP-binding domain maps to 56–226 (IMPVIKGSDV…TKFMRDPVRI (171 aa)). 69 to 76 (AQSGTGKT) lines the ATP pocket. Residues 174–177 (DEAD) carry the DEAD box motif. The region spanning 237 to 398 (GIKQFYIAVE…EMPMNVADLI (162 aa)) is the Helicase C-terminal domain.

The protein belongs to the DEAD box helicase family. eIF4A subfamily. As to quaternary structure, component of the eIF4F complex, which composition varies with external and internal environmental conditions. It is composed of at least eIF4A, eIF4E and eIF4G.

It is found in the cytoplasm. It catalyses the reaction ATP + H2O = ADP + phosphate + H(+). Functionally, ATP-dependent RNA helicase which is a subunit of the eIF4F complex involved in cap recognition and is required for mRNA binding to ribosome. In the current model of translation initiation, eIF4A unwinds RNA secondary structures in the 5'-UTR of mRNAs which is necessary to allow efficient binding of the small ribosomal subunit, and subsequent scanning for the initiator codon. In Coccidioides immitis (strain RS) (Valley fever fungus), this protein is ATP-dependent RNA helicase eIF4A (TIF1).